Consider the following 128-residue polypeptide: Glycine cleavage system H protein (128 aa).

Positions 25-107 constitute a Lipoyl-binding domain; that stretch reads TITVGITHHA…YGAGWFFKLK (83 aa). Position 66 is an N6-lipoyllysine (K66).

This sequence belongs to the GcvH family. As to quaternary structure, the glycine cleavage system is composed of four proteins: P, T, L and H. Requires (R)-lipoate as cofactor.

In terms of biological role, the glycine cleavage system catalyzes the degradation of glycine. The H protein shuttles the methylamine group of glycine from the P protein to the T protein. This Neisseria meningitidis serogroup B (strain ATCC BAA-335 / MC58) protein is Glycine cleavage system H protein.